We begin with the raw amino-acid sequence, 206 residues long: Small ribosomal subunit protein uS4 (206 aa).

The region spanning 96-157 is the S4 RNA-binding domain; that stretch reads SRLDNVVYRM…KAKKQVRIQE (62 aa).

Belongs to the universal ribosomal protein uS4 family. Part of the 30S ribosomal subunit. Contacts protein S5. The interaction surface between S4 and S5 is involved in control of translational fidelity.

One of the primary rRNA binding proteins, it binds directly to 16S rRNA where it nucleates assembly of the body of the 30S subunit. Functionally, with S5 and S12 plays an important role in translational accuracy. This chain is Small ribosomal subunit protein uS4, found in Neisseria gonorrhoeae (strain ATCC 700825 / FA 1090).